We begin with the raw amino-acid sequence, 465 residues long: Gamma-aminobutyric acid receptor subunit gamma-1 (465 aa).

The first 20 residues, 1-20 (MGSGKAFLFSPSLLWSQTRG), serve as a signal peptide directing secretion. The Extracellular portion of the chain corresponds to 21-273 (VRLIFLLLTL…FDLSRRMGYF (253 aa)). N50 and N127 each carry an N-linked (GlcNAc...) asparagine glycan. C188 and C202 are joined by a disulfide. N245 carries an N-linked (GlcNAc...) asparagine glycan. The chain crosses the membrane as a helical span at residues 274-294 (TIQTYIPCILTVVLSWVSFWI). Over 295–300 (NKDAVP) the chain is Cytoplasmic. A helical transmembrane segment spans residues 301 to 320 (ARTSLGITTVLTMTTLSTIA). Residues 321 to 328 (RKSLPKVS) are Extracellular-facing. Residues 329–349 (YVTAMDLFVSVCFIFVFAALM) traverse the membrane as a helical segment. Residues 350 to 444 (EYGTLHYFTS…RIAKIDSYSR (95 aa)) are Cytoplasmic-facing. A helical membrane pass occupies residues 445–465 (IFFPTAFALFNLVYWVGYLYL).

It belongs to the ligand-gated ion channel (TC 1.A.9) family. Gamma-aminobutyric acid receptor (TC 1.A.9.5) subfamily. GABRG1 sub-subfamily. As to quaternary structure, heteropentamer, formed by a combination of alpha (GABRA1-6), beta (GABRB1-3), gamma (GABRG1-3), delta (GABRD), epsilon (GABRE), rho (GABRR1-3), pi (GABRP) and theta (GABRQ) chains, each subunit exhibiting distinct physiological and pharmacological properties. In terms of processing, may be palmitoylated. In terms of tissue distribution, expressed in brain.

It is found in the postsynaptic cell membrane. It localises to the cell membrane. It catalyses the reaction chloride(in) = chloride(out). In terms of biological role, gamma subunit of the heteropentameric ligand-gated chloride channel gated by gamma-aminobutyric acid (GABA), a major inhibitory neurotransmitter in the brain. GABA-gated chloride channels, also named GABA(A) receptors (GABAAR), consist of five subunits arranged around a central pore and contain GABA active binding site(s) located at the alpha and beta subunit interface(s). When activated by GABA, GABAARs selectively allow the flow of chloride anions across the cell membrane down their electrochemical gradient. Chloride influx into the postsynaptic neuron following GABAAR opening decreases the neuron ability to generate a new action potential, thereby reducing nerve transmission. This is Gamma-aminobutyric acid receptor subunit gamma-1 from Mus musculus (Mouse).